Consider the following 259-residue polypeptide: MKNLYRYSCGEGKLDFVMLHGWGMNSNAWRYIINRFGSHFRLHLFDLPGYGFSQSEESFTLPEISETVLKKAPPQAIWLGWSMGGCIASEIALRYPERVLALITVCSSPCFVSQHQWPRISWQVLSCFEQKLEDHLQNTLEQFLLLQTLGTLNSQRDTTSLKSFLFSRPLPKKEVLKAGLKILRYTDMRDSLNAISVPFLRIYGKLDALVPCKIAELLDEAWPHTESVIMHQSAHVPFISHTDDFLEVILYFYQKYFSH.

The AB hydrolase-1 domain occupies 16 to 241 (FVMLHGWGMN…QSAHVPFISH (226 aa)). Substrate contacts are provided by residues Trp-22, 82–83 (SM), and 143–147 (FLLLQ). The active-site Nucleophile is the Ser-82. Residues Asp-207 and His-235 contribute to the active site. Residue His-235 participates in substrate binding.

Belongs to the AB hydrolase superfamily. Carboxylesterase BioH family. As to quaternary structure, monomer.

Its subcellular location is the cytoplasm. The enzyme catalyses 6-carboxyhexanoyl-[ACP] methyl ester + H2O = 6-carboxyhexanoyl-[ACP] + methanol + H(+). It functions in the pathway cofactor biosynthesis; biotin biosynthesis. Functionally, the physiological role of BioH is to remove the methyl group introduced by BioC when the pimeloyl moiety is complete. It allows to synthesize pimeloyl-ACP via the fatty acid synthetic pathway through the hydrolysis of the ester bonds of pimeloyl-ACP esters. The sequence is that of Pimeloyl-[acyl-carrier protein] methyl ester esterase from Hamiltonella defensa subsp. Acyrthosiphon pisum (strain 5AT).